A 122-amino-acid chain; its full sequence is MGFRVLVLIVMVTTSALPFTFSEESGRSPFRPALRSEEAQALRHGLTLLLARRADGQPSDMRQPEMRRPEMRRPEVRRPEVRQPEFAESPVGQKRWDVNDCIHFCLIGVVGRSYTECHTMCT.

A signal peptide spans 1-22; sequence MGFRVLVLIVMVTTSALPFTFS. Residues 23 to 96 constitute a propeptide that is removed on maturation; that stretch reads EESGRSPFRP…AESPVGQKRW (74 aa). Residues 53–91 are disordered; that stretch reads RADGQPSDMRQPEMRRPEMRRPEVRRPEVRQPEFAESPV. A compositionally biased stretch (basic and acidic residues) spans 62-85; the sequence is RQPEMRRPEMRRPEVRRPEVRQPE. Intrachain disulfides connect C101/C121 and C105/C117.

The protein belongs to the conotoxin R superfamily. Expressed by the venom duct.

The protein localises to the secreted. The polypeptide is Conotoxin flf14.2 (Conus anabathrum floridanus (Florida cone)).